A 658-amino-acid chain; its full sequence is Threonine--tRNA ligase (658 aa).

In terms of domain architecture, TGS spans 1-61 (MSDVRVIIQR…RDGESVEPVE (61 aa)). A catalytic region spans residues 259–554 (DHRKLGNELD…LLEHYAGAFP (296 aa)). Residues C353, H404, and H531 each coordinate Zn(2+).

This sequence belongs to the class-II aminoacyl-tRNA synthetase family. Homodimer. The cofactor is Zn(2+).

The protein resides in the cytoplasm. The enzyme catalyses tRNA(Thr) + L-threonine + ATP = L-threonyl-tRNA(Thr) + AMP + diphosphate + H(+). In terms of biological role, catalyzes the attachment of threonine to tRNA(Thr) in a two-step reaction: L-threonine is first activated by ATP to form Thr-AMP and then transferred to the acceptor end of tRNA(Thr). Also edits incorrectly charged L-seryl-tRNA(Thr). In Streptomyces griseus subsp. griseus (strain JCM 4626 / CBS 651.72 / NBRC 13350 / KCC S-0626 / ISP 5235), this protein is Threonine--tRNA ligase.